Here is a 1063-residue protein sequence, read N- to C-terminus: Cellulose synthase A catalytic subunit 7 [UDP-forming] (1063 aa).

The Cytoplasmic segment spans residues 1–213; the sequence is MDTASVTGGE…IPSSKINPYR (213 aa). Positions 18, 21, 37, 40, 45, 48, 60, and 63 each coordinate Zn(2+). The segment at 18–64 adopts an RING-type; degenerate zinc-finger fold; it reads CRVCGEEVAAREDGKPFVACAECGFPVCKPCYEYERSEGTQCCPQCN. A disordered region spans residues 116–154; it reads NGEQPAQKWRPGGPALSSFTGSVAGKDLEQEREMEGGME. Over residues 141-154 the composition is skewed to basic and acidic residues; it reads KDLEQEREMEGGME. Residues 214–234 traverse the membrane as a helical segment; that stretch reads IVIVLRLVVLCFFLKFRITTP. The Extracellular segment spans residues 235–237; it reads AMD. The chain crosses the membrane as a helical span at residues 238 to 258; that stretch reads AVPLWLASVICELWFALSWIL. Residues 259–845 are Cytoplasmic-facing; it reads DQLPKWSPVT…TNTIVYPFTS (587 aa). UDP-alpha-D-glucose is bound by residues S297, K303, E304, and D333. D333 is a catalytic residue. Positions 387–414 form a coiled coil; sequence VKERRAMKREYEEFKVRINALVAKAQKK. A UDP-alpha-D-glucose-binding site is contributed by K474. 2 residues coordinate Mn(2+): K475 and D499. The active site involves D762. A helical membrane pass occupies residues 846 to 866; that stretch reads IPLLAYCTIPAVCLLTGKFII. The Extracellular segment spans residues 867–871; it reads PTLNN. The chain crosses the membrane as a helical span at residues 872–892; it reads LASIWFIALFLSIIATGVLEL. Residues 893 to 907 are Cytoplasmic-facing; the sequence is RWSGVSIEDWWRNEQ. The chain crosses the membrane as a helical span at residues 908–928; sequence FWVIGGVSAHLFAVFQGLLKV. Residues 929–959 lie on the Extracellular side of the membrane; sequence LGGVDTNFTVTSKAAADETDAFGELYLFKWT. N935 is a glycosylation site (N-linked (GlcNAc...) asparagine). A helical transmembrane segment spans residues 960–980; that stretch reads TLLVPPTTLIIINMVGIVAGV. The Cytoplasmic portion of the chain corresponds to 981 to 991; the sequence is SDAVNNGYGSW. The chain crosses the membrane as a helical span at residues 992–1012; that stretch reads GPLFGKLFFSFWVILHLYPFL. At 1013–1021 the chain is on the extracellular side; it reads KGLMGRQNR. Residues 1022–1042 form a helical membrane-spanning segment; that stretch reads TPTIVVLWSILLASIFSLVWV. Residues 1043–1063 lie on the Cytoplasmic side of the membrane; sequence RIDPFIPKPKGPVLKPCGVSC.

Belongs to the glycosyltransferase 2 family. Plant cellulose synthase subfamily. It depends on Mn(2+) as a cofactor. Zn(2+) serves as cofactor.

The protein resides in the cell membrane. It carries out the reaction [(1-&gt;4)-beta-D-glucosyl](n) + UDP-alpha-D-glucose = [(1-&gt;4)-beta-D-glucosyl](n+1) + UDP + H(+). The protein operates within glycan metabolism; plant cellulose biosynthesis. Functionally, catalytic subunit of cellulose synthase terminal complexes ('rosettes'), required for beta-1,4-glucan microfibril crystallization, a major mechanism of the cell wall formation. Involved in the secondary cell wall formation. The sequence is that of Cellulose synthase A catalytic subunit 7 [UDP-forming] (CESA7) from Oryza sativa subsp. japonica (Rice).